The chain runs to 442 residues: MFNNDPLQKYDKELFDLLEKEKNRQIETINLIASENLTNTAVRECLGDRISNKYSEGYPHKRYYGGNDYVDKIEELCYKRALEAFNVSEEEWGVNVQPLSGSAANVQALYALVGVKGKIMGMHLCSGGHLTHGFFDEKKKVSITSDLFESKLYKCNSEGYVDMESVRNLALSFQPKVIICGYTSYPRDIDYKGFREICDEVNAYLFADISHISSFVACNLLNNPFTYADVVTTTTHKILRGPRSALIFFNKKRNPGIDQKINSSVFPSFQGGPHNNKIAAVACQLKEVNTPFFKEYTKQVLLNSKALAECLLKRNLDLVTNGTDNHLIVVDLRKYNITGSKLQETCNAINIALNKNTIPSDVDCVSPSGIRIGTPALTTRGCKEKDMEFIADMLLKAILLTDELQQKYGKKLVDFKKGLVNNPKIDELKKEVVQWAKNLPFA.

Pyridoxal 5'-phosphate-binding positions include Tyr54, 100–102 (SGS), and His236. The cysteines at positions 125 and 364 are disulfide-linked. Lys237 carries the N6-(pyridoxal phosphate)lysine modification. Gly272 provides a ligand contact to pyridoxal 5'-phosphate.

This sequence belongs to the SHMT family. In terms of assembly, homodimer. It depends on pyridoxal 5'-phosphate as a cofactor.

It is found in the cytoplasm. Its subcellular location is the mitochondrion matrix. The protein localises to the plastid. The protein resides in the apicoplast. It localises to the nucleus. It carries out the reaction (6R)-5,10-methylene-5,6,7,8-tetrahydrofolate + glycine + H2O = (6S)-5,6,7,8-tetrahydrofolate + L-serine. It participates in one-carbon metabolism; tetrahydrofolate interconversion. Redox regulation; active in reducing conditions, inactive in oxidizing conditions. The reduction of the cysteine pairs allows the access binding of the tetrahydrofolate substrate to its binding site. This mechanism appears to be unique to Plasmodium species. Its function is as follows. Catalyzes the interconversion of serine to glycine accompanied with the production of 5,10-methylenetetrahydrofolate, a source of one-carbon units used by thymidylate synthase to convert dUMP to dTMP for DNA synthesis. Binds to its own mRNA and to the mRNA of bifunctional dihydrofolate reductase-thymidylate synthase (DHFR-TS) in vitro; the physiological relevance of this interaction is not clear. The protein is Serine hydroxymethyltransferase of Plasmodium falciparum (isolate 3D7).